We begin with the raw amino-acid sequence, 412 residues long: 1-deoxy-D-xylulose 5-phosphate reductoisomerase (412 aa).

NADPH contacts are provided by T10, G11, S12, I13, G36, K37, N38, and N130. K131 is a binding site for 1-deoxy-D-xylulose 5-phosphate. E132 contributes to the NADPH binding site. Residue D156 participates in Mn(2+) binding. Residues S157, E158, S194, and H217 each contribute to the 1-deoxy-D-xylulose 5-phosphate site. Mn(2+) is bound at residue E158. G223 serves as a coordination point for NADPH. 1-deoxy-D-xylulose 5-phosphate-binding residues include S230, N235, K236, and E239. E239 contributes to the Mn(2+) binding site.

Belongs to the DXR family. Requires Mg(2+) as cofactor. Mn(2+) serves as cofactor.

It catalyses the reaction 2-C-methyl-D-erythritol 4-phosphate + NADP(+) = 1-deoxy-D-xylulose 5-phosphate + NADPH + H(+). It functions in the pathway isoprenoid biosynthesis; isopentenyl diphosphate biosynthesis via DXP pathway; isopentenyl diphosphate from 1-deoxy-D-xylulose 5-phosphate: step 1/6. Catalyzes the NADPH-dependent rearrangement and reduction of 1-deoxy-D-xylulose-5-phosphate (DXP) to 2-C-methyl-D-erythritol 4-phosphate (MEP). The sequence is that of 1-deoxy-D-xylulose 5-phosphate reductoisomerase from Prochlorococcus marinus (strain NATL2A).